The chain runs to 239 residues: Pyrroloquinoline-quinone synthase (239 aa).

The protein belongs to the PqqC family.

It carries out the reaction 6-(2-amino-2-carboxyethyl)-7,8-dioxo-1,2,3,4,7,8-hexahydroquinoline-2,4-dicarboxylate + 3 O2 = pyrroloquinoline quinone + 2 H2O2 + 2 H2O + H(+). It participates in cofactor biosynthesis; pyrroloquinoline quinone biosynthesis. Ring cyclization and eight-electron oxidation of 3a-(2-amino-2-carboxyethyl)-4,5-dioxo-4,5,6,7,8,9-hexahydroquinoline-7,9-dicarboxylic-acid to PQQ. This Gluconobacter oxydans (strain 621H) (Gluconobacter suboxydans) protein is Pyrroloquinoline-quinone synthase.